The chain runs to 351 residues: Cytosolic sulfotransferase 11 (351 aa).

Position 98-103 (98-103 (KGGTTW)) interacts with 3'-phosphoadenylyl sulfate. His-163 (proton acceptor) is an active-site residue. 3'-phosphoadenylyl sulfate contacts are provided by residues Arg-184, Ser-192, Tyr-250, and 316-318 (RKG).

Belongs to the sulfotransferase 1 family.

Its subcellular location is the cytoplasm. Its function is as follows. Sulfotransferase that utilizes 3'-phospho-5'-adenylyl sulfate (PAPS) as sulfonate donor. The chain is Cytosolic sulfotransferase 11 (SOT11) from Arabidopsis thaliana (Mouse-ear cress).